Reading from the N-terminus, the 104-residue chain is MTNRLELSGVIAKDPKRSQSPAGVPHCHFVLEHRSYQREADLPRQVYCYINVVSSGKGLQVLTQDLAVGVHTKVAGFISYQTGRNGIGKLVLHADHIEIICSGD.

Positions 1–101 (MTNRLELSGV…LHADHIEIIC (101 aa)) constitute an SSB domain.

It belongs to the PriB family. In terms of assembly, homodimer. Interacts with PriA and DnaT. Component of the replication restart primosome. Primosome assembly occurs via a 'hand-off' mechanism. PriA binds to replication forks, subsequently PriB then DnaT bind; DnaT then displaces ssDNA to generate the helicase loading substrate.

Its function is as follows. Involved in the restart of stalled replication forks, which reloads the replicative helicase on sites other than the origin of replication; the PriA-PriB pathway is the major replication restart pathway. During primosome assembly it facilitates complex formation between PriA and DnaT on DNA; stabilizes PriA on DNA. Stimulates the DNA unwinding activity of PriA helicase. The protein is Replication restart protein PriB of Photobacterium profundum (strain SS9).